The primary structure comprises 508 residues: Photosystem II CP47 reaction center protein (508 aa).

6 helical membrane-spanning segments follow: residues 21–36 (AVHIMHTALVSGWAGS), 101–115 (IVFSGLCFLAAIWHW), 140–156 (GIHLFLAGVACFGFGAF), 203–218 (IAAGTLGILAGLFHLS), 237–252 (VLSSSIAAVFFAAFVV), and 457–472 (TFALLFFFGHIWHGAR).

This sequence belongs to the PsbB/PsbC family. PsbB subfamily. PSII is composed of 1 copy each of membrane proteins PsbA, PsbB, PsbC, PsbD, PsbE, PsbF, PsbH, PsbI, PsbJ, PsbK, PsbL, PsbM, PsbT, PsbX, PsbY, PsbZ, Psb30/Ycf12, at least 3 peripheral proteins of the oxygen-evolving complex and a large number of cofactors. It forms dimeric complexes. Binds multiple chlorophylls. PSII binds additional chlorophylls, carotenoids and specific lipids. serves as cofactor.

The protein localises to the plastid. The protein resides in the chloroplast thylakoid membrane. In terms of biological role, one of the components of the core complex of photosystem II (PSII). It binds chlorophyll and helps catalyze the primary light-induced photochemical processes of PSII. PSII is a light-driven water:plastoquinone oxidoreductase, using light energy to abstract electrons from H(2)O, generating O(2) and a proton gradient subsequently used for ATP formation. The protein is Photosystem II CP47 reaction center protein of Agrostis stolonifera (Creeping bentgrass).